The primary structure comprises 194 residues: Der GTPase-activating protein YihI (194 aa).

A disordered region spans residues 1-81; it reads MSRSKKTRRI…AKVKKDPRVG (81 aa). Basic and acidic residues-rich tracts occupy residues 9–23 and 36–47; these read RISDIMPARKADKKP and TRYELDVQAREE. The segment covering 59–70 has biased composition (polar residues); the sequence is GSRNVITEQKTA.

This sequence belongs to the YihI family. In terms of assembly, interacts with Der.

Its function is as follows. A GTPase-activating protein (GAP) that modifies Der/EngA GTPase function. May play a role in ribosome biogenesis. This chain is Der GTPase-activating protein YihI, found in Haemophilus ducreyi (strain 35000HP / ATCC 700724).